Consider the following 159-residue polypeptide: Stress-induced protein 1 (159 aa).

The sHSP domain maps to 33 to 141 (NNFNNIVPQQ…TVRALPIHTS (109 aa)).

The protein belongs to the small heat shock protein (HSP20) family.

This is Stress-induced protein 1 from Caenorhabditis elegans.